The chain runs to 3414 residues: Hemocyanin 1 (3414 aa).

An N-terminal signal peptide occupies residues 1-16 (MLSVRLLIVVLALANA). Glu17 contributes to the a divalent metal cation binding site. Positions 17–437 (ENLVRKSVEH…PPVKHHQSAN (421 aa)) are functional unit a (wall). Cu cation is bound at residue His58. Cys64 and Cys73 are oxidised to a cystine. A cross-link (2'-(S-cysteinyl)-histidine (Cys-His)) is located at residues 74-76 (CIH). Cu cation-binding residues include His76, His85, His195, His199, and His226. Residues Cys185 and Cys252 are joined by a disulfide bond. Residues 287–290 (CELH) constitute a cross-link (2'-(S-cysteinyl)-histidine (Cys-His)). Cys339 and Cys351 are oxidised to a cystine. N-linked (GlcNAc...) asparagine glycosylation occurs at Asn403. The segment at 438–851 (LLVRKNINDL…RVKFDKVPRS (414 aa)) is functional unit b (wall). Residue His478 coordinates Cu cation. Cys484 and Cys495 form a disulfide bridge. The 2'-(S-cysteinyl)-histidine (Cys-His) cross-link spans 496–498 (CVH). The Cu cation site is built by His498 and His507. A glycan (N-linked (GlcNAc...) asparagine) is linked at Asn545. The cysteines at positions 608 and 674 are disulfide-linked. The Cu cation site is built by His618, His622, and His649. One copy of the WD 1 repeat lies at 628–669 (SEHFSMSSLHYTAFDPLFYFHHSNVDRLWAVWQALQMRRHKP). An a divalent metal cation-binding site is contributed by Glu737. A functional unit c (wall) region spans residues 852–1271 (RLIRKNVDRL…EVYQAEVTSA (420 aa)). His892 serves as a coordination point for Cu cation. An intrachain disulfide couples Cys898 to Cys909. A cross-link (2'-(S-cysteinyl)-histidine (Cys-His)) is located at residues 910–912 (CVH). His912, His921, His1031, His1035, and His1062 together coordinate Cu cation. Disulfide bonds link Cys1021/Cys1088 and Cys1178/Cys1184. The stretch at 1041 to 1082 (AQPYGMASLRYTAFDPLFYLHHSNTDRIWAIWQALQKYRGKP) is one WD 2 repeat. The interval 1272-1680 (NRIRKNIENL…AHTDDGHTEP (409 aa)) is functional unit d (wall). His1309 provides a ligand contact to Cu cation. Cys1315 and Cys1324 are oxidised to a cystine. Positions 1325-1327 (CVH) form a cross-link, 2'-(S-cysteinyl)-histidine (Cys-His). His1327, His1336, His1440, His1444, and His1471 together coordinate Cu cation. Intrachain disulfides connect Cys1430–Cys1497 and Cys1585–Cys1595. One copy of the WD 3 repeat lies at 1450-1491 (KGKYSMSNLDYAAFDPVFFLHHATTDRIWAIWQDLQRFRKRP). Asn1648 carries an N-linked (GlcNAc...) asparagine glycan. Positions 1681-2097 (VMIRKDITQL…HDISSHHLSL (417 aa)) are functional unit e (wall). A Cu cation-binding site is contributed by His1721. An intrachain disulfide couples Cys1727 to Cys1738. Residues 1739–1741 (CVH) constitute a cross-link (2'-(S-cysteinyl)-histidine (Cys-His)). Residues His1741, His1750, His1863, His1867, and His1894 each coordinate Cu cation. Intrachain disulfides connect Cys1853–Cys1920 and Cys2009–Cys2015. One copy of the WD 4 repeat lies at 1873–1914 (KEPYGIGHLHYASYDPLFYIHHSQTDRIWAIWQSLQRFRGLS). Residues 2098–2517 (NKVRHDLSTL…EDHHSSSMAG (420 aa)) form a functional unit f (wall) region. His2138 lines the Cu cation pocket. A disulfide bridge links Cys2144 with Cys2154. N-linked (GlcNAc...) asparagine glycosylation is present at Asn2145. Positions 2155-2157 (CIH) form a cross-link, 2'-(S-cysteinyl)-histidine (Cys-His). Residues His2157, His2166, His2276, His2280, and His2307 each coordinate Cu cation. A WD 5 repeat occupies 2163–2199 (PHWHRLYTLQFEQALRRHGSSVAVPYWDWTKPIHNIP). 2 disulfide bridges follow: Cys2266-Cys2333 and Cys2420-Cys2426. Glu2424 is a binding site for a divalent metal cation. Residues 2518–2921 (HGVRKEINTL…EKHHEDHHED (404 aa)) are functional unit g (internal arc). His2558 lines the Cu cation pocket. Cys2564 and Cys2574 are disulfide-bonded. An N-linked (GlcNAc...) asparagine glycan is attached at Asn2571. A cross-link (2'-(S-cysteinyl)-histidine (Cys-His)) is located at residues 2575–2577 (CTH). The Cu cation site is built by His2577, His2586, His2686, His2690, and His2717. Cystine bridges form between Cys2676–Cys2743 and Cys2830–Cys2836. The stretch at 2696-2737 (LTPYGMSTLEYTTYDPLFWLHHANTDRIWAIWQALQEYRGLP) is one WD 6 repeat. The tract at residues 2922-3414 (ILVRKNIHSL…LRIHVHVDDE (493 aa)) is functional unit h (internal slab). His2962 is a binding site for Cu cation. Cys2968 and Cys2978 form a disulfide bridge. The 2'-(S-cysteinyl)-histidine (Cys-His) cross-link spans 2979 to 2981 (CVH). Residues His2981, His2990, His3091, His3095, and His3122 each coordinate Cu cation. Residues Cys3081 and Cys3148 are joined by a disulfide bond. Residues 3101–3142 (AEKYSMSTLEYSAFDPYFMIHHASLDKIWIIWQELQKRRVKP) form a WD 7 repeat. The N-linked (GlcNAc...) asparagine glycan is linked to Asn3278. Cysteines 3367 and 3400 form a disulfide.

The protein belongs to the tyrosinase family. Hemocyanin subfamily. In terms of assembly, homo-didecamer, with two decamers assembled face-to-face at their open ends. This didecamer form a stable 25 nM cylinder wall. Probably N-glycosylated. Asn-1280 and Asn-2484 are buried deeply in the protein which make them inaccessible for sugar attachment. Asn-3278 N-glycan is likely to represent a diantennate carbohydrate tree. The didecamer is almost evenly tagged by a total of 120 sugar trees. As to expression, hemolymph.

It is found in the secreted. The protein resides in the extracellular space. In terms of biological role, hemocyanins are copper-containing oxygen carriers occurring freely dissolved in the hemolymph of many mollusks and arthropods. This chain is Hemocyanin 1, found in Megathura crenulata (Giant keyhole limpet).